Here is a 109-residue protein sequence, read N- to C-terminus: Large ribosomal subunit protein uL1 (109 aa).

The protein belongs to the universal ribosomal protein uL1 family. In terms of assembly, part of the 50S ribosomal subunit.

Binds directly to 23S rRNA. The L1 stalk is quite mobile in the ribosome, and is involved in E site tRNA release. Functionally, protein L1 is also a translational repressor protein, it controls the translation of the L11 operon by binding to its mRNA. The protein is Large ribosomal subunit protein uL1 (rplA) of Aquifex pyrophilus.